A 239-amino-acid chain; its full sequence is Tubulin beta-3 chain (239 aa).

Residue Asn-22 participates in GTP binding. The segment at 207-239 is disordered; that stretch reads EESNMNDLVSEYQQYQDASAEPXXEQEEDYEEA. The span at 230–239 shows a compositional bias: acidic residues; the sequence is XEQEEDYEEA.

Belongs to the tubulin family. As to quaternary structure, dimer of alpha and beta chains. A typical microtubule is a hollow water-filled tube with an outer diameter of 25 nm and an inner diameter of 15 nM. Alpha-beta heterodimers associate head-to-tail to form protofilaments running lengthwise along the microtubule wall with the beta-tubulin subunit facing the microtubule plus end conferring a structural polarity. Microtubules usually have 13 protofilaments but different protofilament numbers can be found in some organisms and specialized cells. It depends on Mg(2+) as a cofactor.

It is found in the cytoplasm. The protein resides in the cytoskeleton. Tubulin is the major constituent of microtubules, a cylinder consisting of laterally associated linear protofilaments composed of alpha- and beta-tubulin heterodimers. Microtubules grow by the addition of GTP-tubulin dimers to the microtubule end, where a stabilizing cap forms. Below the cap, tubulin dimers are in GDP-bound state, owing to GTPase activity of alpha-tubulin. The protein is Tubulin beta-3 chain (TUBB3) of Anemia phyllitidis (Fern).